The primary structure comprises 506 residues: Maturase K (506 aa).

This sequence belongs to the intron maturase 2 family. MatK subfamily.

It localises to the plastid. The protein resides in the chloroplast. Usually encoded in the trnK tRNA gene intron. Probably assists in splicing its own and other chloroplast group II introns. The polypeptide is Maturase K (Mentzelia lindleyi (Blazing star)).